A 103-amino-acid chain; its full sequence is Co-chaperonin GroES (103 aa).

This sequence belongs to the GroES chaperonin family. Heptamer of 7 subunits arranged in a ring. Interacts with the chaperonin GroEL.

It is found in the plastid. The protein localises to the cyanelle. Its function is as follows. Together with the chaperonin GroEL, plays an essential role in assisting protein folding. The GroEL-GroES system forms a nano-cage that allows encapsulation of the non-native substrate proteins and provides a physical environment optimized to promote and accelerate protein folding. GroES binds to the apical surface of the GroEL ring, thereby capping the opening of the GroEL channel. This is Co-chaperonin GroES from Cyanophora paradoxa.